The following is a 211-amino-acid chain: Large ribosomal subunit protein uL3 (211 aa).

An N5-methylglutamine modification is found at Q150.

Belongs to the universal ribosomal protein uL3 family. Part of the 50S ribosomal subunit. Forms a cluster with proteins L14 and L19. Methylated by PrmB.

Functionally, one of the primary rRNA binding proteins, it binds directly near the 3'-end of the 23S rRNA, where it nucleates assembly of the 50S subunit. This Pseudomonas syringae pv. tomato (strain ATCC BAA-871 / DC3000) protein is Large ribosomal subunit protein uL3.